Consider the following 225-residue polypeptide: NAD(P)H-quinone oxidoreductase subunit K, chloroplastic (225 aa).

Positions 43, 44, 108, and 139 each coordinate [4Fe-4S] cluster.

It belongs to the complex I 20 kDa subunit family. In terms of assembly, NDH is composed of at least 16 different subunits, 5 of which are encoded in the nucleus. Requires [4Fe-4S] cluster as cofactor.

It is found in the plastid. Its subcellular location is the chloroplast thylakoid membrane. The catalysed reaction is a plastoquinone + NADH + (n+1) H(+)(in) = a plastoquinol + NAD(+) + n H(+)(out). It catalyses the reaction a plastoquinone + NADPH + (n+1) H(+)(in) = a plastoquinol + NADP(+) + n H(+)(out). Functionally, NDH shuttles electrons from NAD(P)H:plastoquinone, via FMN and iron-sulfur (Fe-S) centers, to quinones in the photosynthetic chain and possibly in a chloroplast respiratory chain. The immediate electron acceptor for the enzyme in this species is believed to be plastoquinone. Couples the redox reaction to proton translocation, and thus conserves the redox energy in a proton gradient. The sequence is that of NAD(P)H-quinone oxidoreductase subunit K, chloroplastic from Gossypium barbadense (Sea Island cotton).